A 231-amino-acid chain; its full sequence is MSSYQQKQPFTPPPQPQQHQVKQPCQPPPQDTFVPITKDPCHPNVPSPGNTNIAEQGYVKIPEQGSIKVPDTGYTKIPDSGNTKVPESGCTSVPGSGYSVVPQPGYTKVPDQGYTKVPESGCTSVPGSGYSVVPQPGYTKVPESGCTSVPGPGYPTVPQPGYTKVPESGCTSVPGSGYSVIPQPSYTKVPESGCTSVPGPGYPTVPQPGYTKVQEPNPSIVTPGLSQKKTK.

The interval 1-104 (MSSYQQKQPF…GSGYSVVPQP (104 aa)) is disordered. N-acetylserine is present on S2. 21 repeat units span residues 55-62 (EQGYVKIP), 63-70 (EQGSIKVP), 71-78 (DTGYTKIP), 79-86 (DSGNTKVP), 87-94 (ESGCTSVP), 95-102 (GSGYSVVP), 103-110 (QPGYTKVP), 111-118 (DQGYTKVP), 119-126 (ESGCTSVP), 127-134 (GSGYSVVP), 135-142 (QPGYTKVP), 143-150 (ESGCTSVP), 151-158 (GPGYPTVP), 159-166 (QPGYTKVP), 167-174 (ESGCTSVP), 175-182 (GSGYSVIP), 183-190 (QPSYTKVP), 191-198 (ESGCTSVP), 199-206 (GPGYPTVP), 207-214 (QPGYTKVQ), and 215-222 (EPNPSIVT). Positions 55 to 222 (EQGYVKIPEQ…VQEPNPSIVT (168 aa)) are 21 X 8 AA approximate tandem repeats. Over residues 80–94 (SGNTKVPESGCTSVP) the composition is skewed to polar residues. A disordered region spans residues 188–231 (KVPESGCTSVPGPGYPTVPQPGYTKVQEPNPSIVTPGLSQKKTK). Polar residues predominate over residues 214 to 231 (QEPNPSIVTPGLSQKKTK).

Belongs to the cornifin (SPRR) family. Suprabasal layers of the squamous epithelia of esophagus, tongue and oral mucosa.

It localises to the cytoplasm. In terms of biological role, can serve as a substrate in transglutaminase-catalyzed cross linking reactions and can function as a cross-linked envelope precursor. This Oryctolagus cuniculus (Rabbit) protein is Small proline-rich protein 3 (SPRR3).